The chain runs to 223 residues: MTSNQLAQYIDHTALTAEKNEQDISTLCNEAIEHGFYSVCINSGYIPLAKEKLAGSNVKICTVVGFPLGANLTSVKAFETQEAIKAGANEIDMVINVGWIKSQKWDAVKQDIQAVFNACNGTPLKVILETCLLTKDEIVKACEICKEIGVAFVKTSTGFNKGGATVEDVALMKQTVGNIGVKASGGVRDTETALAMIKAGATRIGASAGIAIISGTQDTQSTY.

The active-site Proton donor/acceptor is Asp-92. Lys-154 acts as the Schiff-base intermediate with acetaldehyde in catalysis. Residue Lys-182 is the Proton donor/acceptor of the active site.

The protein belongs to the DeoC/FbaB aldolase family. DeoC type 1 subfamily.

The protein resides in the cytoplasm. The enzyme catalyses 2-deoxy-D-ribose 5-phosphate = D-glyceraldehyde 3-phosphate + acetaldehyde. The protein operates within carbohydrate degradation; 2-deoxy-D-ribose 1-phosphate degradation; D-glyceraldehyde 3-phosphate and acetaldehyde from 2-deoxy-alpha-D-ribose 1-phosphate: step 2/2. Functionally, catalyzes a reversible aldol reaction between acetaldehyde and D-glyceraldehyde 3-phosphate to generate 2-deoxy-D-ribose 5-phosphate. This chain is Deoxyribose-phosphate aldolase, found in Haemophilus influenzae (strain 86-028NP).